Here is a 61-residue protein sequence, read N- to C-terminus: Large ribosomal subunit protein bL28 (61 aa).

The disordered stretch occupies residues 1–26 (MAKDFVTGRKTTFGKKRSHALNQTNR).

The protein belongs to the bacterial ribosomal protein bL28 family.

The polypeptide is Large ribosomal subunit protein bL28 (Ligilactobacillus salivarius (strain UCC118) (Lactobacillus salivarius)).